We begin with the raw amino-acid sequence, 203 residues long: MASIRLLPSCIVLMFLARSSLCYFITIDAHGEECFHDKVTSGTKMGLIFEVAEGGFLDIDVKIIGPDQKVIYSGERETSGKYTFAAHMDGTYNYCFSNKMSTMTPKVLKFSMDIGEAPKDTSKEDNAGHDKLSEMVSQLSEAMTGVKHEQEYMEVRERIHRSINDNTNSRVVWWSFFESLVLVAMTLGQVYYLKRFFEVRRVV.

The signal sequence occupies residues 1–22; it reads MASIRLLPSCIVLMFLARSSLC. Topologically, residues 23-170 are lumenal; the sequence is YFITIDAHGE…RSINDNTNSR (148 aa). The 83-residue stretch at 32 to 114 folds into the GOLD domain; sequence EECFHDKVTS…PKVLKFSMDI (83 aa). Residues 171–191 form a helical membrane-spanning segment; sequence VVWWSFFESLVLVAMTLGQVY. The Cytoplasmic portion of the chain corresponds to 192–203; sequence YLKRFFEVRRVV.

It belongs to the EMP24/GP25L family.

Its subcellular location is the cytoplasmic vesicle membrane. In terms of biological role, could have a role in the budding of coatomer-coated and other species of coated vesicles. The chain is Transmembrane emp24 domain-containing protein from Nematostella vectensis (Starlet sea anemone).